Here is a 368-residue protein sequence, read N- to C-terminus: Homoserine O-acetyltransferase (368 aa).

An AB hydrolase-1 domain is found at 44–350 (NAILVAHAWT…AYGHDAFLLE (307 aa)). Residue S150 is the Nucleophile of the active site. R217 contacts substrate. Catalysis depends on residues D311 and H344. D345 serves as a coordination point for substrate.

It belongs to the AB hydrolase superfamily. MetX family. Homodimer.

The protein localises to the cytoplasm. The catalysed reaction is L-homoserine + acetyl-CoA = O-acetyl-L-homoserine + CoA. The protein operates within amino-acid biosynthesis; L-methionine biosynthesis via de novo pathway; O-acetyl-L-homoserine from L-homoserine: step 1/1. Its function is as follows. Transfers an acetyl group from acetyl-CoA to L-homoserine, forming acetyl-L-homoserine. The sequence is that of Homoserine O-acetyltransferase from Geobacter sulfurreducens (strain ATCC 51573 / DSM 12127 / PCA).